Reading from the N-terminus, the 643-residue chain is Chromosomal replication initiator protein DnaA (643 aa).

The interval 1–97 is domain I, interacts with DnaA modulators; the sequence is MADVPADLAA…VDDSAGEPPP (97 aa). The tract at residues 87-303 is disordered; the sequence is TVDDSAGEPP…ASGPGEPTAR (217 aa). The domain II stretch occupies residues 97–302; it reads PAAPPAQQTP…PASGPGEPTA (206 aa). Polar residues predominate over residues 195 to 209; the sequence is SPSSQDAYGSPSQDY. Residues 222–269 are compositionally biased toward basic and acidic residues; it reads QRGDYDTPRAEYEPARPDYDSARPDYESARPEYDQRDPVRRELPEPPA. Low complexity predominate over residues 291–300; it reads PAPASGPGEP. Residues 303–519 form a domain III, AAA+ region region; it reads RLNPKYLFDT…GALIRVTAFA (217 aa). ATP is bound by residues G347, G349, K350, and T351. Residues 520-643 are domain IV, binds dsDNA; sequence SLNRQPVDLG…TELTNRIKNG (124 aa).

It belongs to the DnaA family. As to quaternary structure, oligomerizes as a right-handed, spiral filament on DNA at oriC.

The protein resides in the cytoplasm. In terms of biological role, plays an essential role in the initiation and regulation of chromosomal replication. ATP-DnaA binds to the origin of replication (oriC) to initiate formation of the DNA replication initiation complex once per cell cycle. Binds the DnaA box (a 9 base pair repeat at the origin) and separates the double-stranded (ds)DNA. Forms a right-handed helical filament on oriC DNA; dsDNA binds to the exterior of the filament while single-stranded (ss)DNA is stabiized in the filament's interior. The ATP-DnaA-oriC complex binds and stabilizes one strand of the AT-rich DNA unwinding element (DUE), permitting loading of DNA polymerase. After initiation quickly degrades to an ADP-DnaA complex that is not apt for DNA replication. Binds acidic phospholipids. This is Chromosomal replication initiator protein DnaA from Streptomyces reticuli.